Here is a 508-residue protein sequence, read N- to C-terminus: DASH complex subunit ASK1 (508 aa).

Disordered stretches follow at residues 86–138 (LVDG…TLSS) and 150–355 (SRAA…QLRS). The span at 116-138 (EPSQYTPRPQTSAGGHDTTTLSS) shows a compositional bias: polar residues. The span at 161 to 175 (QHHDDSSVLTDRDGD) shows a compositional bias: basic and acidic residues. The span at 201-213 (DEMDIDMDEEDSE) shows a compositional bias: acidic residues. The segment covering 229–238 (RYYDDDHGFE) has biased composition (basic and acidic residues). Residues 239-258 (QGEEEEDEEEEEEEEEEEEG) show a composition bias toward acidic residues. Over residues 326–338 (IKQEDTEKKRPLW) the composition is skewed to basic and acidic residues.

Belongs to the DASH complex ASK1 family. In terms of assembly, component of the DASH complex consisting of ASK1, DAD1, DAD2, DAD3, DAD4, DAM1, DUO1, HSK3, SPC19 and SPC34, with a stoichiometry of one copy of each subunit per complex. Multiple DASH complexes oligomerize to form a ring that encircles spindle microtubules and organizes the rod-like NDC80 complexes of the outer kinetochore. On cytoplasmic microtubules, DASH complexes appear to form patches instead of rings.

It localises to the chromosome. Its subcellular location is the centromere. The protein resides in the kinetochore. The protein localises to the cytoplasm. It is found in the cytoskeleton. It localises to the spindle. Its subcellular location is the nucleus. Its function is as follows. Component of the DASH complex that connects microtubules with kinetochores and couples microtubule depolymerisation to chromosome movement; it is involved in retrieving kinetochores to the spindle poles before their re-orientation on the spindle in early mitosis and allows microtubule depolymerization to pull chromosomes apart and resist detachment during anaphase. Kinetochores, consisting of a centromere-associated inner segment and a microtubule-contacting outer segment, play a crucial role in chromosome segregation by mediating the physical connection between centromeric DNA and microtubules. Kinetochores also serve as an input point for the spindle assembly checkpoint, which delays anaphase until all chromosomes have bioriented on the mitotic spindle. The sequence is that of DASH complex subunit ASK1 from Chaetomium thermophilum (strain DSM 1495 / CBS 144.50 / IMI 039719) (Thermochaetoides thermophila).